The sequence spans 523 residues: Tryptamine 5-hydroxylase (523 aa).

A helical transmembrane segment spans residues 5-25 (MASTMSLALLVLSAAYVLVAL). Cysteine 453 is a binding site for heme.

The protein belongs to the cytochrome P450 family. Requires heme as cofactor.

Its subcellular location is the endoplasmic reticulum membrane. The enzyme catalyses tryptamine + reduced [NADPH--hemoprotein reductase] + O2 = serotonin + oxidized [NADPH--hemoprotein reductase] + H2O + H(+). Involved in serotonin biosynthesis. Catalyzes the conversion of tryptamine to serotonin. Accumulation of serotonin may play a role in innate immunity. This Oryza sativa subsp. japonica (Rice) protein is Tryptamine 5-hydroxylase.